The chain runs to 484 residues: UDP-glucose:undecaprenyl-phosphate glucose-1-phosphate transferase (484 aa).

5 helical membrane passes run Met-37 to Ala-57, Tyr-59 to Leu-79, Val-93 to Val-113, Gly-122 to Leu-142, and Ile-299 to Val-319.

The protein belongs to the bacterial sugar transferase family.

It is found in the cell inner membrane. The enzyme catalyses di-trans,octa-cis-undecaprenyl phosphate + UDP-alpha-D-glucose = alpha-D-glucosyl di-trans,octa-cis-undecaprenyl diphosphate + UMP. It participates in glycan biosynthesis; xanthan biosynthesis. Functionally, is the initiating enzyme for the synthesis of the exopolysaccharide xanthan. Catalyzes the transfer of the glucose-1-phosphate moiety from UDP-Glc onto the carrier lipid undecaprenyl phosphate (C55-P), forming a phosphoanhydride bond yielding to glucosyl-pyrophosphoryl-undecaprenol (Glc-PP-C55). This Xanthomonas campestris pv. campestris protein is UDP-glucose:undecaprenyl-phosphate glucose-1-phosphate transferase (gumD).